We begin with the raw amino-acid sequence, 117 residues long: MDMMVPAQLLGLLLLWFPGSRCDIQMTQSPSSVSASVGDRVTITCRASQGISSWLAWYQQKPGKAPKLLIYAASSLQSGVPSRFSGSGSGTDFTLTISSLQPEDFATYYCQQANSFP.

Residues methionine 1–cysteine 22 form the signal peptide. Positions aspartate 23–cysteine 45 are framework-1. The 94-residue stretch at isoleucine 24–proline 117 folds into the Ig-like domain. A disulfide bridge links cysteine 45 with cysteine 110. Residues arginine 46–alanine 56 are complementarity-determining-1. The framework-2 stretch occupies residues tryptophan 57 to tyrosine 71. The segment at alanine 72–serine 78 is complementarity-determining-2. The segment at glycine 79–cysteine 110 is framework-3. The interval glutamine 111 to proline 117 is complementarity-determining-3.

In terms of assembly, immunoglobulins are composed of two identical heavy chains and two identical light chains; disulfide-linked.

The protein resides in the secreted. It is found in the cell membrane. Functionally, v region of the variable domain of immunoglobulin light chains that participates in the antigen recognition. Immunoglobulins, also known as antibodies, are membrane-bound or secreted glycoproteins produced by B lymphocytes. In the recognition phase of humoral immunity, the membrane-bound immunoglobulins serve as receptors which, upon binding of a specific antigen, trigger the clonal expansion and differentiation of B lymphocytes into immunoglobulins-secreting plasma cells. Secreted immunoglobulins mediate the effector phase of humoral immunity, which results in the elimination of bound antigens. The antigen binding site is formed by the variable domain of one heavy chain, together with that of its associated light chain. Thus, each immunoglobulin has two antigen binding sites with remarkable affinity for a particular antigen. The variable domains are assembled by a process called V-(D)-J rearrangement and can then be subjected to somatic hypermutations which, after exposure to antigen and selection, allow affinity maturation for a particular antigen. In Homo sapiens (Human), this protein is Immunoglobulin kappa variable 1D-12.